The primary structure comprises 413 residues: Glucose-1-phosphatase (413 aa).

A signal peptide spans 1–22 (MKKSLLAVAVAGAVLLSSAVQA). Substrate is bound at residue arginine 39. Catalysis depends on histidine 40, which acts as the Nucleophile. Substrate-binding residues include arginine 43, arginine 116, and glutamate 218. The active-site Proton donor is the aspartate 312.

This sequence belongs to the histidine acid phosphatase family. Homodimer.

The protein resides in the periplasm. The enzyme catalyses alpha-D-glucose 1-phosphate + H2O = D-glucose + phosphate. This Salmonella typhimurium (strain LT2 / SGSC1412 / ATCC 700720) protein is Glucose-1-phosphatase (agp).